The following is a 170-amino-acid chain: ATP synthase subunit b (170 aa).

A helical transmembrane segment spans residues 15-37; sequence FNLFETNILNWAVVVFGLYKFLP.

This sequence belongs to the ATPase B chain family. In terms of assembly, F-type ATPases have 2 components, F(1) - the catalytic core - and F(0) - the membrane proton channel. F(1) has five subunits: alpha(3), beta(3), gamma(1), delta(1), epsilon(1). F(0) has four main subunits: a(1), b(1), b'(1) and c(10-14). The alpha and beta chains form an alternating ring which encloses part of the gamma chain. F(1) is attached to F(0) by a central stalk formed by the gamma and epsilon chains, while a peripheral stalk is formed by the delta, b and b' chains.

It is found in the cellular thylakoid membrane. Its function is as follows. F(1)F(0) ATP synthase produces ATP from ADP in the presence of a proton or sodium gradient. F-type ATPases consist of two structural domains, F(1) containing the extramembraneous catalytic core and F(0) containing the membrane proton channel, linked together by a central stalk and a peripheral stalk. During catalysis, ATP synthesis in the catalytic domain of F(1) is coupled via a rotary mechanism of the central stalk subunits to proton translocation. In terms of biological role, component of the F(0) channel, it forms part of the peripheral stalk, linking F(1) to F(0). The polypeptide is ATP synthase subunit b (Prochlorococcus marinus (strain MIT 9312)).